Reading from the N-terminus, the 406-residue chain is Protein PHYTOCHROME KINASE SUBSTRATE 4 (406 aa).

Residues 106–119 (SWNSQTGLLSNKNR) are compositionally biased toward polar residues. Residues 106-133 (SWNSQTGLLSNKNRQGSDRDGRRSSKKG) are disordered.

It belongs to the PKS family. Interacts in vitro with PHYA and PHYB. Expressed in the hypocotyl elongation zone. Not found in the root elongation zone.

Modulates phytochrome-mediated control of hypocotyl growth orientation. Involved in PHYA and PHYB signaling. Acts as an inhibitor of asymmetric growth. Not involved in the control of leaf flattening. The sequence is that of Protein PHYTOCHROME KINASE SUBSTRATE 4 (PKS4) from Arabidopsis thaliana (Mouse-ear cress).